The chain runs to 284 residues: Ribosomal RNA small subunit methyltransferase A (284 aa).

S-adenosyl-L-methionine-binding residues include asparagine 28, leucine 30, glycine 55, glutamate 77, aspartate 103, and asparagine 123.

This sequence belongs to the class I-like SAM-binding methyltransferase superfamily. rRNA adenine N(6)-methyltransferase family. RsmA subfamily.

The protein resides in the cytoplasm. The enzyme catalyses adenosine(1518)/adenosine(1519) in 16S rRNA + 4 S-adenosyl-L-methionine = N(6)-dimethyladenosine(1518)/N(6)-dimethyladenosine(1519) in 16S rRNA + 4 S-adenosyl-L-homocysteine + 4 H(+). Its function is as follows. Specifically dimethylates two adjacent adenosines (A1518 and A1519) in the loop of a conserved hairpin near the 3'-end of 16S rRNA in the 30S particle. May play a critical role in biogenesis of 30S subunits. The protein is Ribosomal RNA small subunit methyltransferase A of Bradyrhizobium diazoefficiens (strain JCM 10833 / BCRC 13528 / IAM 13628 / NBRC 14792 / USDA 110).